Here is a 362-residue protein sequence, read N- to C-terminus: Endopolygalacturonase II (362 aa).

A signal peptide spans 1–21; the sequence is MHSFASLLAYGLAASATLASA. Positions 22-27 are excised as a propeptide; that stretch reads SPIEAR. Cysteines 30 and 45 form a disulfide. A PbH1 1 repeat occupies 156 to 186; it reads ADDITLTDITINNADGDTLGGHNTDAFDVGN. The active-site Proton donor is the Asp201. Cys203 and Cys219 are disulfide-bonded. His223 is a catalytic residue. PbH1 repeat units follow at residues 238–259, 267–289, and 301–322; these read VKNV…RIKT, VSEI…VIQQ, and TNGV…DSKA. Residue Asn240 is glycosylated (N-linked (GlcNAc...) (high mannose) asparagine). 2 disulfide bridges follow: Cys329–Cys334 and Cys353–Cys362.

Belongs to the glycosyl hydrolase 28 family.

It localises to the secreted. The enzyme catalyses (1,4-alpha-D-galacturonosyl)n+m + H2O = (1,4-alpha-D-galacturonosyl)n + (1,4-alpha-D-galacturonosyl)m.. Functionally, involved in maceration and soft-rotting of plant tissue. Hydrolyzes the 1,4-alpha glycosidic bonds of de-esterified pectate in the smooth region of the plant cell wall. The protein is Endopolygalacturonase II of Aspergillus niger.